The chain runs to 634 residues: Nucleoside triphosphatase I (634 aa).

The region spanning 41 to 203 (FLGLDSMNSL…ALLVNLLRPG (163 aa)) is the Helicase ATP-binding domain. 54 to 61 (QETGVGKT) is a binding site for ATP. A DEXH box motif is present at residues 140–143 (DECH). The region spanning 355 to 531 (SLYQALYEHS…EFSQLYRVLK (177 aa)) is the Helicase C-terminal domain. The binding to the cap-specific mRNA (nucleoside-2'-O-)-methyltransferase stretch occupies residues 456–523 (DIFILDMTWN…EIIQNKAREF (68 aa)).

Belongs to the helicase family. NPH I subfamily. As to quaternary structure, monomer. Interacts (via C-terminus) with RAP94 (via N-terminus). Interacts with the cap-specific mRNA (nucleoside-2'-O-)-methyltransferase.

It is found in the virion. The catalysed reaction is a ribonucleoside 5'-triphosphate + H2O = a ribonucleoside 5'-diphosphate + phosphate + H(+). In terms of biological role, DNA-dependent ATPase required for providing the needed energy to achieve the termination of early transcripts. Acts in concert with the RAP94 subunit of the virion RNA polymerase and the capping enzyme/VTF to catalyze release of UUUUUNU-containing nascent RNA from the elongation complex. NPH-I must bind ssDNA in order to exhibit ATPase activity. The chain is Nucleoside triphosphatase I (NPH1) from Homo sapiens (Human).